Here is a 256-residue protein sequence, read N- to C-terminus: Small ribosomal subunit protein uS2 (256 aa).

The protein belongs to the universal ribosomal protein uS2 family.

This is Small ribosomal subunit protein uS2 from Ruegeria sp. (strain TM1040) (Silicibacter sp.).